Here is a 392-residue protein sequence, read N- to C-terminus: Formate-dependent phosphoribosylglycinamide formyltransferase (392 aa).

Residues 12–13 and glutamate 72 each bind N(1)-(5-phospho-beta-D-ribosyl)glycinamide; that span reads EL. ATP is bound by residues arginine 104, lysine 145, 150–155, 185–188, and glutamate 193; these read SSGKGQ and EAFV. An ATP-grasp domain is found at 109-300; that stretch reads DLAARDLGLR…EFELHARAVL (192 aa). The Mg(2+) site is built by glutamate 258 and glutamate 270. Residues aspartate 277, lysine 348, and 355 to 356 each bind N(1)-(5-phospho-beta-D-ribosyl)glycinamide; that span reads RR.

It belongs to the PurK/PurT family. As to quaternary structure, homodimer.

It catalyses the reaction N(1)-(5-phospho-beta-D-ribosyl)glycinamide + formate + ATP = N(2)-formyl-N(1)-(5-phospho-beta-D-ribosyl)glycinamide + ADP + phosphate + H(+). Its pathway is purine metabolism; IMP biosynthesis via de novo pathway; N(2)-formyl-N(1)-(5-phospho-D-ribosyl)glycinamide from N(1)-(5-phospho-D-ribosyl)glycinamide (formate route): step 1/1. Its function is as follows. Involved in the de novo purine biosynthesis. Catalyzes the transfer of formate to 5-phospho-ribosyl-glycinamide (GAR), producing 5-phospho-ribosyl-N-formylglycinamide (FGAR). Formate is provided by PurU via hydrolysis of 10-formyl-tetrahydrofolate. This Chlorobaculum tepidum (strain ATCC 49652 / DSM 12025 / NBRC 103806 / TLS) (Chlorobium tepidum) protein is Formate-dependent phosphoribosylglycinamide formyltransferase.